The following is a 387-amino-acid chain: Alpha-sarcoglycan (387 aa).

The N-terminal stretch at 1-23 (MAATLTWILLFVGLLAGLRDTKA) is a signal peptide. At 24-290 (QQTTLYPLVG…ATGRDFLADA (267 aa)) the chain is on the extracellular side. Asn-174 and Asn-246 each carry an N-linked (GlcNAc...) asparagine glycan. A helical transmembrane segment spans residues 291–311 (LVTLLVPLLVALLLTLLLAYI). The Cytoplasmic portion of the chain corresponds to 312–387 (MCCRREGQLK…AQVPLILDQH (76 aa)). A Phosphoserine modification is found at Ser-377.

The protein belongs to the sarcoglycan alpha/epsilon family. As to quaternary structure, interacts with the syntrophin SNTA1. Cross-link to form 2 major subcomplexes: one consisting of SGCB, SGCD and SGCG and the other consisting of SGCB and SGCD. The association between SGCB and SGCG is particularly strong while SGCA is loosely associated with the other sarcoglycans. In terms of tissue distribution, strongly expressed in skeletal and heart muscle.

The protein resides in the cell membrane. The protein localises to the sarcolemma. It is found in the cytoplasm. It localises to the cytoskeleton. Component of the sarcoglycan complex, a subcomplex of the dystrophin-glycoprotein complex which forms a link between the F-actin cytoskeleton and the extracellular matrix. This chain is Alpha-sarcoglycan (SGCA), found in Mesocricetus auratus (Golden hamster).